We begin with the raw amino-acid sequence, 354 residues long: tRNA N6-adenosine threonylcarbamoyltransferase (354 aa).

3 residues coordinate a divalent metal cation: His-121, His-125, and Tyr-142. Residues 142–146 (YVSGG), Asp-174, Gly-189, Glu-193, and Asn-285 contribute to the substrate site. Asp-313 lines the a divalent metal cation pocket.

The protein belongs to the KAE1 / TsaD family. Component of the EKC/KEOPS complex composed of at least bud32, cgi121, gon7, kae1 and pcc1; the whole complex dimerizes. Requires a divalent metal cation as cofactor.

It localises to the cytoplasm. Its subcellular location is the nucleus. It catalyses the reaction L-threonylcarbamoyladenylate + adenosine(37) in tRNA = N(6)-L-threonylcarbamoyladenosine(37) in tRNA + AMP + H(+). Its function is as follows. Component of the EKC/KEOPS complex that is required for the formation of a threonylcarbamoyl group on adenosine at position 37 (t(6)A37) in tRNAs that read codons beginning with adenine. The complex is probably involved in the transfer of the threonylcarbamoyl moiety of threonylcarbamoyl-AMP (TC-AMP) to the N6 group of A37. Kae1 likely plays a direct catalytic role in this reaction, but requires other protein(s) of the complex to fulfill this activity. The EKC/KEOPS complex also promotes both telomere uncapping and telomere elongation. The complex is required for efficient recruitment of transcriptional coactivators. This is tRNA N6-adenosine threonylcarbamoyltransferase (gpe-1) from Neurospora crassa (strain ATCC 24698 / 74-OR23-1A / CBS 708.71 / DSM 1257 / FGSC 987).